The sequence spans 107 residues: Alpha-elapitoxin-Al2a (107 aa).

The N-terminal stretch at 1–21 is a signal peptide; it reads MKTLLLTLVVVTIVCLDLGDS. 5 disulfides stabilise this stretch: Cys-24/Cys-41, Cys-34/Cys-62, Cys-47/Cys-51, Cys-66/Cys-77, and Cys-78/Cys-83.

This sequence belongs to the three-finger toxin family. Long-chain subfamily. Type II alpha-neurotoxin sub-subfamily. In terms of tissue distribution, expressed by the venom gland.

It is found in the secreted. Functionally, binds with high affinity to muscular (alpha-1/CHRNA1) and neuronal (alpha-7/CHRNA7) nicotinic acetylcholine receptor (nAChR) and inhibits acetylcholine from binding to the receptor, thereby impairing neuromuscular and neuronal transmission. This Austrelaps labialis (Pygmy copperhead) protein is Alpha-elapitoxin-Al2a.